A 782-amino-acid polypeptide reads, in one-letter code: Calcium-independent phospholipase A2-gamma (782 aa).

Asn-4 carries N-linked (GlcNAc...) asparagine glycosylation. Disordered stretches follow at residues 219–275 (EKMS…PSAI) and 317–343 (SKSQ…AEEK). Basic and acidic residues predominate over residues 220 to 248 (KMSQQKENEHFRDKSELEDKKVEEGKLRS). Asn-361 carries N-linked (GlcNAc...) asparagine glycosylation. In terms of domain architecture, PNPLA spans 445–640 (LSIDGGGTRG…LLNNPSALAM (196 aa)). The GXGXXG signature appears at 449-454 (GGGTRG). A helical membrane pass occupies residues 475–495 (LFDYICGVSTGAILAFMLGLF). Residues 481 to 485 (GVSTG) carry the GXSXG motif. Catalysis depends on Ser-483, which acts as the Nucleophile. Catalysis depends on Asp-627, which acts as the Proton acceptor. A DGA/G motif is present at residues 627–629 (DGG). Lys-736 carries the post-translational modification N6-succinyllysine.

In terms of tissue distribution, expressed in parenchymal tissues including heart, skeletal muscle, placenta, brain, liver and pancreas. Also expressed in bronchial epithelial cells and kidney. Highest expression is observed in skeletal muscle and heart.

The protein localises to the endoplasmic reticulum membrane. The protein resides in the mitochondrion membrane. Its subcellular location is the peroxisome membrane. It carries out the reaction a 1,2-diacyl-sn-glycero-3-phosphocholine + H2O = a 1-acyl-sn-glycero-3-phosphocholine + a fatty acid + H(+). The enzyme catalyses a 1,2-diacyl-sn-glycero-3-phosphocholine + H2O = a 2-acyl-sn-glycero-3-phosphocholine + a fatty acid + H(+). It catalyses the reaction a 1,2-diacyl-sn-glycero-3-phosphoethanolamine + H2O = a 1-acyl-sn-glycero-3-phosphoethanolamine + a fatty acid + H(+). The catalysed reaction is a 1-O-(1Z-alkenyl)-2-acyl-sn-glycero-3-phosphocholine + H2O = a 1-O-(1Z-alkenyl)-sn-glycero-3-phosphocholine + a fatty acid + H(+). It carries out the reaction a 1-acyl-sn-glycero-3-phosphocholine + H2O = sn-glycerol 3-phosphocholine + a fatty acid + H(+). The enzyme catalyses 1-acyl-2-(9Z,12Z)-octadecadienoyl-sn-glycero-3-phosphocholine + H2O = a 1-acyl-sn-glycero-3-phosphocholine + (9Z,12Z)-octadecadienoate + H(+). It catalyses the reaction 1-acyl-2-(5Z,8Z,11Z,14Z-eicosatetraenoyl)-sn-glycero-3-phosphocholine + H2O = a 1-acyl-sn-glycero-3-phosphocholine + (5Z,8Z,11Z,14Z)-eicosatetraenoate + H(+). The catalysed reaction is 1-hexadecanoyl-2-(5Z,8Z,11Z,14Z-eicosatetraenoyl)-sn-glycero-3-phosphocholine + H2O = 1-hexadecanoyl-sn-glycero-3-phosphocholine + (5Z,8Z,11Z,14Z)-eicosatetraenoate + H(+). It carries out the reaction 1-octadecanoyl-2-(9Z-octadecenoyl)-sn-glycero-3-phosphocholine + H2O = 1-octadecanoyl-sn-glycero-3-phosphocholine + (9Z)-octadecenoate + H(+). The enzyme catalyses 1-hexadecanoyl-2-(9Z-octadecenoyl)-sn-glycero-3-phosphocholine + H2O = 1-hexadecanoyl-sn-glycero-3-phosphocholine + (9Z)-octadecenoate + H(+). It catalyses the reaction 1-hexadecanoyl-2-(9Z,12Z-octadecadienoyl)-sn-glycero-3-phosphocholine + H2O = (9Z,12Z)-octadecadienoate + 1-hexadecanoyl-sn-glycero-3-phosphocholine + H(+). The catalysed reaction is 1-acyl-2-(9Z,12Z)-octadecadienoyl-sn-glycero-3-phosphoethanolamine + H2O = a 1-acyl-sn-glycero-3-phosphoethanolamine + (9Z,12Z)-octadecadienoate + H(+). It carries out the reaction 1-acyl-2-(5Z,8Z,11Z,14Z)-eicosatetraenoyl-sn-glycero-3-phosphoethanolamine + H2O = a 1-acyl-sn-glycero-3-phosphoethanolamine + (5Z,8Z,11Z,14Z)-eicosatetraenoate + H(+). The enzyme catalyses 1-hexadecanoyl-2-(5Z,8Z,11Z,14Z-eicosatetraenoyl)-sn-glycero-3-phosphoethanolamine + H2O = 1-hexadecanoyl-sn-glycero-3-phosphoethanolamine + (5Z,8Z,11Z,14Z)-eicosatetraenoate + H(+). It catalyses the reaction 1-hexadecanoyl-2-(5Z,8Z,11Z,14Z-eicosatetraenoyl)-sn-glycero-3-phosphocholine + H2O = 2-(5Z,8Z,11Z,14Z)-eicosatetraenoyl-sn-glycero-3-phosphocholine + hexadecanoate + H(+). The catalysed reaction is 1-octadecanoyl-2-(9Z-octadecenoyl)-sn-glycero-3-phosphocholine + H2O = 2-(9Z-octadecenoyl)-sn-glycero-3-phosphocholine + octadecanoate + H(+). It carries out the reaction 1-hexadecanoyl-2-(4Z,7Z,10Z,13Z,16Z,19Z-docosahexaenoyl)-sn-glycero-3-phosphocholine + H2O = 2-(4Z,7Z,10Z,13Z,16Z,19Z-docosahexaenoyl)-sn-glycero-3-phosphocholine + hexadecanoate + H(+). The enzyme catalyses 1-O-(1Z)-hexadecenyl-2 (5Z,8Z,11Z,14Z)-eicosatetraenoyl-sn-glycero-3-phosphocholine + H2O = 1-(1Z-hexadecenyl)-sn-glycero-3-phosphocholine + (5Z,8Z,11Z,14Z)-eicosatetraenoate + H(+). It catalyses the reaction 1-O-(1Z-hexadecenyl)-2-(9Z-octadecenoyl)-sn-glycero-3-phosphocholine + H2O = 1-(1Z-hexadecenyl)-sn-glycero-3-phosphocholine + (9Z)-octadecenoate + H(+). The catalysed reaction is 1-hexadecanoyl-sn-glycero-3-phosphocholine + H2O = sn-glycerol 3-phosphocholine + hexadecanoate + H(+). It carries out the reaction 1',3'-bis-[1,2-di-(9Z,12Z-octadecadienoyl)-sn-glycero-3-phospho]-glycerol + H2O = 1'-[1,2-di-(9Z,12Z-octadecadienoyl)-sn-glycero-3-phospho]-3'-[1-(9Z,12Z-octadecadienoyl)-sn-glycero-3-phospho]-glycerol + (9Z,12Z)-octadecadienoate + H(+). The enzyme catalyses 1'-[1-acyl-2-(9-hydroxy-(10E,12Z)-octadecadienoyl)-sn-glycero-3-phospho]-3'-[1,2-diacyl-sn-glycero-3-phospho]-glycerol + H2O = 9-hydroxy-(10E,12Z)-octadecadienoate + 1'-[1,2-diacyl-sn-glycero-3-phospho],3'-[1-acyl-sn-glycero-3-phospho]-glycerol + H(+). It functions in the pathway phospholipid metabolism. Calcium-independent phospholipase. Inhibited by (E)-6-bromomethylene-3-1-naphthalenyl-2H-tetrahydropyran-2-one (BEL). The activity toward 1-hexadecanoyl-2-(5Z,8Z,11Z,14Z-eicosatetraenoyl)-sn-glycero-3-phosphocholine is stimulated by cardiolipin. In terms of biological role, calcium-independent and membrane-bound phospholipase, that catalyzes the esterolytic cleavage of fatty acids from glycerophospholipids to yield free fatty acids and lysophospholipids, hence regulating membrane physical properties and the release of lipid second messengers and growth factors. Hydrolyzes phosphatidylethanolamine, phosphatidylcholine and probably phosphatidylinositol with a possible preference for the former. Also has a broad substrate specificity in terms of fatty acid moieties, hydrolyzing saturated and mono-unsaturated fatty acids at nearly equal rates from either the sn-1 or sn-2 position in diacyl phosphatidylcholine. However, has a weak activity toward polyunsaturated fatty acids at the sn-2 position, and thereby favors the production of 2-arachidonoyl lysophosphatidylcholine, a key branch point metabolite in eicosanoid signaling. On the other hand, can produce arachidonic acid from the sn-1 position of diacyl phospholipid and from the sn-2 position of arachidonate-containing plasmalogen substrates. Therefore, plays an important role in the mobilization of arachidonic acid in response to cellular stimuli and the generation of lipid second messengers. Can also hydrolyze lysophosphatidylcholine. In the mitochondrial compartment, catalyzes the hydrolysis and release of oxidized aliphatic chains from cardiolipin and integrates mitochondrial bioenergetics and signaling. It is essential for maintaining efficient bioenergetic mitochondrial function through tailoring mitochondrial membrane lipid metabolism and composition. This chain is Calcium-independent phospholipase A2-gamma, found in Homo sapiens (Human).